We begin with the raw amino-acid sequence, 176 residues long: Large ribosomal subunit protein uL6 (176 aa).

The protein belongs to the universal ribosomal protein uL6 family. Part of the 50S ribosomal subunit.

In terms of biological role, this protein binds to the 23S rRNA, and is important in its secondary structure. It is located near the subunit interface in the base of the L7/L12 stalk, and near the tRNA binding site of the peptidyltransferase center. This is Large ribosomal subunit protein uL6 from Methanospirillum hungatei JF-1 (strain ATCC 27890 / DSM 864 / NBRC 100397 / JF-1).